The sequence spans 371 residues: Putative glutamate--cysteine ligase 2 (371 aa).

The protein belongs to the glutamate--cysteine ligase type 2 family. YbdK subfamily.

It carries out the reaction L-cysteine + L-glutamate + ATP = gamma-L-glutamyl-L-cysteine + ADP + phosphate + H(+). Functionally, ATP-dependent carboxylate-amine ligase which exhibits weak glutamate--cysteine ligase activity. This chain is Putative glutamate--cysteine ligase 2, found in Burkholderia multivorans (strain ATCC 17616 / 249).